The sequence spans 216 residues: Uracil-DNA glycosylase (216 aa).

Catalysis depends on D59, which acts as the Proton acceptor.

Belongs to the uracil-DNA glycosylase (UDG) superfamily. UNG family.

The protein resides in the cytoplasm. It carries out the reaction Hydrolyzes single-stranded DNA or mismatched double-stranded DNA and polynucleotides, releasing free uracil.. Its function is as follows. Excises uracil residues from the DNA which can arise as a result of misincorporation of dUMP residues by DNA polymerase or due to deamination of cytosine. The polypeptide is Uracil-DNA glycosylase (Staphylococcus epidermidis (strain ATCC 12228 / FDA PCI 1200)).